The sequence spans 172 residues: SsrA-binding protein (172 aa).

It belongs to the SmpB family.

It is found in the cytoplasm. Functionally, required for rescue of stalled ribosomes mediated by trans-translation. Binds to transfer-messenger RNA (tmRNA), required for stable association of tmRNA with ribosomes. tmRNA and SmpB together mimic tRNA shape, replacing the anticodon stem-loop with SmpB. tmRNA is encoded by the ssrA gene; the 2 termini fold to resemble tRNA(Ala) and it encodes a 'tag peptide', a short internal open reading frame. During trans-translation Ala-aminoacylated tmRNA acts like a tRNA, entering the A-site of stalled ribosomes, displacing the stalled mRNA. The ribosome then switches to translate the ORF on the tmRNA; the nascent peptide is terminated with the 'tag peptide' encoded by the tmRNA and targeted for degradation. The ribosome is freed to recommence translation, which seems to be the essential function of trans-translation. The sequence is that of SsrA-binding protein from Dehalococcoides mccartyi (strain ATCC BAA-2266 / KCTC 15142 / 195) (Dehalococcoides ethenogenes (strain 195)).